A 669-amino-acid chain; its full sequence is Glycine--tRNA ligase beta subunit (669 aa).

It belongs to the class-II aminoacyl-tRNA synthetase family. In terms of assembly, tetramer of two alpha and two beta subunits.

Its subcellular location is the cytoplasm. It carries out the reaction tRNA(Gly) + glycine + ATP = glycyl-tRNA(Gly) + AMP + diphosphate. In Phenylobacterium zucineum (strain HLK1), this protein is Glycine--tRNA ligase beta subunit.